The primary structure comprises 172 residues: Adenine phosphoribosyltransferase (172 aa).

It belongs to the purine/pyrimidine phosphoribosyltransferase family. Homodimer.

It is found in the cytoplasm. The enzyme catalyses AMP + diphosphate = 5-phospho-alpha-D-ribose 1-diphosphate + adenine. Its pathway is purine metabolism; AMP biosynthesis via salvage pathway; AMP from adenine: step 1/1. In terms of biological role, catalyzes a salvage reaction resulting in the formation of AMP, that is energically less costly than de novo synthesis. The sequence is that of Adenine phosphoribosyltransferase from Clostridium botulinum (strain Alaska E43 / Type E3).